The following is a 252-amino-acid chain: MLAKRIIAALDIRAGRVVKGIKFRNIRDAGDPVELARRYESEGIDEIVFLDITASHEKRGILLDLVERVAEEIYVPFTVGGGIKSAEEAGEIIKRGADKVFVNTAAVERPELVGEIAELVGSANLVVAIDAKWNGSFWEVYTHGGRKPRGIDAVEWARKVEELGAGEILLTSMDTDGTKEGFDIPLTRAVANAVDIPVIASGGAGRPEHFYEAFKAGAEAALAASIFHYGEYTVGQLKGFLAERGIPVRLDY.

Active-site residues include D11 and D130.

Belongs to the HisA/HisF family. As to quaternary structure, heterodimer of HisH and HisF.

Its subcellular location is the cytoplasm. It catalyses the reaction 5-[(5-phospho-1-deoxy-D-ribulos-1-ylimino)methylamino]-1-(5-phospho-beta-D-ribosyl)imidazole-4-carboxamide + L-glutamine = D-erythro-1-(imidazol-4-yl)glycerol 3-phosphate + 5-amino-1-(5-phospho-beta-D-ribosyl)imidazole-4-carboxamide + L-glutamate + H(+). Its pathway is amino-acid biosynthesis; L-histidine biosynthesis; L-histidine from 5-phospho-alpha-D-ribose 1-diphosphate: step 5/9. Its function is as follows. IGPS catalyzes the conversion of PRFAR and glutamine to IGP, AICAR and glutamate. The HisF subunit catalyzes the cyclization activity that produces IGP and AICAR from PRFAR using the ammonia provided by the HisH subunit. The protein is Imidazole glycerol phosphate synthase subunit HisF of Thermococcus kodakarensis (strain ATCC BAA-918 / JCM 12380 / KOD1) (Pyrococcus kodakaraensis (strain KOD1)).